Consider the following 930-residue polypeptide: Isoleucine--tRNA ligase (930 aa).

The short motif at 57-67 (PYANGNIHVGH) is the 'HIGH' region element. E554 contacts L-isoleucyl-5'-AMP. A 'KMSKS' region motif is present at residues 595-599 (KMSKS). K598 contributes to the ATP binding site. 4 residues coordinate Zn(2+): C888, C891, C908, and C911.

The protein belongs to the class-I aminoacyl-tRNA synthetase family. IleS type 1 subfamily. Monomer. Requires Zn(2+) as cofactor.

The protein resides in the cytoplasm. The catalysed reaction is tRNA(Ile) + L-isoleucine + ATP = L-isoleucyl-tRNA(Ile) + AMP + diphosphate. Functionally, catalyzes the attachment of isoleucine to tRNA(Ile). As IleRS can inadvertently accommodate and process structurally similar amino acids such as valine, to avoid such errors it has two additional distinct tRNA(Ile)-dependent editing activities. One activity is designated as 'pretransfer' editing and involves the hydrolysis of activated Val-AMP. The other activity is designated 'posttransfer' editing and involves deacylation of mischarged Val-tRNA(Ile). This is Isoleucine--tRNA ligase from Streptococcus pneumoniae (strain CGSP14).